The following is a 319-amino-acid chain: Ribose-phosphate pyrophosphokinase (319 aa).

Residues Asp-40 to Glu-42 and Arg-99 to Gln-100 each bind ATP. Mg(2+) contacts are provided by His-134 and Asp-174. The active site involves Lys-198. Residues Arg-200, Asp-224, and Asp-228–Thr-232 each bind D-ribose 5-phosphate.

This sequence belongs to the ribose-phosphate pyrophosphokinase family. Class I subfamily. As to quaternary structure, homohexamer. Mg(2+) is required as a cofactor.

It localises to the cytoplasm. It carries out the reaction D-ribose 5-phosphate + ATP = 5-phospho-alpha-D-ribose 1-diphosphate + AMP + H(+). It participates in metabolic intermediate biosynthesis; 5-phospho-alpha-D-ribose 1-diphosphate biosynthesis; 5-phospho-alpha-D-ribose 1-diphosphate from D-ribose 5-phosphate (route I): step 1/1. Functionally, involved in the biosynthesis of the central metabolite phospho-alpha-D-ribosyl-1-pyrophosphate (PRPP) via the transfer of pyrophosphoryl group from ATP to 1-hydroxyl of ribose-5-phosphate (Rib-5-P). This is Ribose-phosphate pyrophosphokinase from Coxiella burnetii (strain RSA 493 / Nine Mile phase I).